The sequence spans 359 residues: MLDHVTPFFALFACILVLFALGWHIRSRNVGTITLSLYLFFGNLDNFVNSVAWWSTAEDKAPGFCEVSIRLRHALYIAIPASNLVIARKLESIASTRQVRASASEHKKSIIIDLLISVGLPVLYVSLMIVNQTNRYGIIEQVGCWPFLSLSWVWVLLVAAPVLIVSFASAVYSVLAFRWFWIRRRQFQAVLASSASTLNKARYIRLLVLTAIDMLLFFPIYVGSVSDTIRGAITTSYVSWSYVHTGFSYIPQFSAEVMEMQPSFKARLILSRLVCPISAYIFFAMFGLGQEARQGYKHAVLKALVFCKLRKERQKPIQNHIVANIEVVTFQSRETSGGIDGSPHSEKFSINTPTKYEEA.

7 consecutive transmembrane segments (helical) span residues 5 to 25 (VTPF…GWHI), 33 to 53 (ITLS…SVAW), 71 to 87 (LRHA…LVIA), 110 to 130 (IIID…LMIV), 147 to 167 (FLSL…IVSF), 206 to 226 (LLVL…GSVS), and 268 to 288 (LILS…MFGL). Residues 335–359 (TSGGIDGSPHSEKFSINTPTKYEEA) are disordered. Residues 348 to 359 (FSINTPTKYEEA) show a composition bias toward polar residues.

This sequence belongs to the G-protein coupled receptor 4 family.

It localises to the membrane. Receptor for the A2 pheromone, a prenylated mating factor. This is Pheromone receptor 1 (PRA1) from Ustilago hordei (Barley covered smut fungus).